Consider the following 190-residue polypeptide: Ribosome maturation factor RimM (190 aa).

The PRC barrel domain maps to 102–190; that stretch reads EDEYYWIDLV…RIDSDWPLED (89 aa).

The protein belongs to the RimM family. As to quaternary structure, binds ribosomal protein uS19.

The protein resides in the cytoplasm. Functionally, an accessory protein needed during the final step in the assembly of 30S ribosomal subunit, possibly for assembly of the head region. Essential for efficient processing of 16S rRNA. May be needed both before and after RbfA during the maturation of 16S rRNA. It has affinity for free ribosomal 30S subunits but not for 70S ribosomes. This is Ribosome maturation factor RimM from Bordetella avium (strain 197N).